The following is a 416-amino-acid chain: CinA-like protein (416 aa).

Belongs to the CinA family.

This chain is CinA-like protein, found in Synechocystis sp. (strain ATCC 27184 / PCC 6803 / Kazusa).